The primary structure comprises 26 residues: uncharacterized protein (26 aa).

This is an uncharacterized protein from Archaeoglobus fulgidus (strain ATCC 49558 / DSM 4304 / JCM 9628 / NBRC 100126 / VC-16).